Consider the following 38-residue polypeptide: Large ribosomal subunit protein bL36 (38 aa).

The protein belongs to the bacterial ribosomal protein bL36 family.

The sequence is that of Large ribosomal subunit protein bL36 from Phytoplasma australiense.